The primary structure comprises 263 residues: MVQTVYKNSDQTVFEDAKALFQLNKNILLKGPTGSGKTKLAETLSNVMKLPMHQVNCSVDLDTESLLGFKTIHTNEEGHQEIVFIDGPVIKAMKEGHILYIDEINMAKPETLPILNGVLDYRRQLTNPYTGEVIKAAPGFNVIAAINEGYVGTLPMNEALKNRFIVIEVDYIDGDILKTVIKEQSKLQDEQLIQHIVKFNEDLRTMTKQGQISEEAASIRALIDLSDLATVMPIERAVQRTIIDKLEDEREQQAILNAIELNF.

Residue 31 to 38 (GPTGSGKT) coordinates ATP.

This sequence belongs to the CbbQ/NirQ/NorQ/GpvN family.

This is an uncharacterized protein from Staphylococcus epidermidis (strain ATCC 12228 / FDA PCI 1200).